The chain runs to 353 residues: Photosystem II protein D1 (353 aa).

N-acetylthreonine is present on T2. At T2 the chain carries Phosphothreonine. The next 3 helical transmembrane spans lie at 29–46 (YIGWFGVLMIPTLLTATS), 118–133 (HFLLGVACYMGREWEL), and 142–156 (WIAVAYSAPVAAAAA). H118 serves as a coordination point for chlorophyll a. Y126 contributes to the pheophytin a binding site. 2 residues coordinate [CaMn4O5] cluster: D170 and E189. Residues 197-218 (FHMLGVAGVFGGSLFSAMHGSL) traverse the membrane as a helical segment. Chlorophyll a is bound at residue H198. A quinone is bound by residues H215 and 264 to 265 (SF). Residue H215 participates in Fe cation binding. Fe cation is bound at residue H272. The chain crosses the membrane as a helical span at residues 274-288 (FLAAWPVVGIWFTAL). Residues H332, E333, D342, and A344 each coordinate [CaMn4O5] cluster. Positions 345 to 353 (AVEAPSING) are excised as a propeptide.

This sequence belongs to the reaction center PufL/M/PsbA/D family. PSII is composed of 1 copy each of membrane proteins PsbA, PsbB, PsbC, PsbD, PsbE, PsbF, PsbH, PsbI, PsbJ, PsbK, PsbL, PsbM, PsbT, PsbX, PsbY, PsbZ, Psb30/Ycf12, at least 3 peripheral proteins of the oxygen-evolving complex and a large number of cofactors. It forms dimeric complexes. Requires The D1/D2 heterodimer binds P680, chlorophylls that are the primary electron donor of PSII, and subsequent electron acceptors. It shares a non-heme iron and each subunit binds pheophytin, quinone, additional chlorophylls, carotenoids and lipids. D1 provides most of the ligands for the Mn4-Ca-O5 cluster of the oxygen-evolving complex (OEC). There is also a Cl(-1) ion associated with D1 and D2, which is required for oxygen evolution. The PSII complex binds additional chlorophylls, carotenoids and specific lipids. as cofactor. Post-translationally, tyr-161 forms a radical intermediate that is referred to as redox-active TyrZ, YZ or Y-Z. C-terminally processed by CTPA; processing is essential to allow assembly of the oxygen-evolving complex and thus photosynthetic growth.

The protein resides in the plastid. It localises to the chloroplast thylakoid membrane. The catalysed reaction is 2 a plastoquinone + 4 hnu + 2 H2O = 2 a plastoquinol + O2. Functionally, photosystem II (PSII) is a light-driven water:plastoquinone oxidoreductase that uses light energy to abstract electrons from H(2)O, generating O(2) and a proton gradient subsequently used for ATP formation. It consists of a core antenna complex that captures photons, and an electron transfer chain that converts photonic excitation into a charge separation. The D1/D2 (PsbA/PsbD) reaction center heterodimer binds P680, the primary electron donor of PSII as well as several subsequent electron acceptors. This Vitis vinifera (Grape) protein is Photosystem II protein D1.